The sequence spans 76 residues: Protein krueppel (76 aa).

C2H2-type zinc fingers lie at residues 11–33 and 39–61; these read FECS…LRLH and YSCP…LRVH.

It belongs to the krueppel C2H2-type zinc-finger protein family.

It is found in the nucleus. Krueppel is a gap class segmentation protein. This Manduca sexta (Tobacco hawkmoth) protein is Protein krueppel (Kr).